Here is a 393-residue protein sequence, read N- to C-terminus: Formate-dependent phosphoribosylglycinamide formyltransferase (393 aa).

Residues 22 to 23 (EL) and glutamate 82 contribute to the N(1)-(5-phospho-beta-D-ribosyl)glycinamide site. ATP contacts are provided by residues arginine 114, lysine 155, 160 to 165 (SSGKGQ), 195 to 198 (EGFV), and glutamate 203. One can recognise an ATP-grasp domain in the interval 119–308 (RLAAEELGLP…EFALHVRAFT (190 aa)). Residues glutamate 267 and glutamate 279 each contribute to the Mg(2+) site. N(1)-(5-phospho-beta-D-ribosyl)glycinamide-binding positions include aspartate 286, lysine 356, and 363-364 (RR).

This sequence belongs to the PurK/PurT family. In terms of assembly, homodimer.

It catalyses the reaction N(1)-(5-phospho-beta-D-ribosyl)glycinamide + formate + ATP = N(2)-formyl-N(1)-(5-phospho-beta-D-ribosyl)glycinamide + ADP + phosphate + H(+). The protein operates within purine metabolism; IMP biosynthesis via de novo pathway; N(2)-formyl-N(1)-(5-phospho-D-ribosyl)glycinamide from N(1)-(5-phospho-D-ribosyl)glycinamide (formate route): step 1/1. In terms of biological role, involved in the de novo purine biosynthesis. Catalyzes the transfer of formate to 5-phospho-ribosyl-glycinamide (GAR), producing 5-phospho-ribosyl-N-formylglycinamide (FGAR). Formate is provided by PurU via hydrolysis of 10-formyl-tetrahydrofolate. This is Formate-dependent phosphoribosylglycinamide formyltransferase from Vibrio cholerae serotype O1 (strain M66-2).